A 394-amino-acid chain; its full sequence is Argininosuccinate synthase (394 aa).

ATP-binding positions include 7 to 15 (AYSGGLDTS) and alanine 34. L-citrulline contacts are provided by tyrosine 85 and serine 90. An ATP-binding site is contributed by glycine 115. Positions 117, 121, and 122 each coordinate L-aspartate. L-citrulline is bound at residue asparagine 121. L-citrulline is bound by residues arginine 125, serine 176, serine 185, glutamate 261, and tyrosine 273.

It belongs to the argininosuccinate synthase family. Type 1 subfamily. Homotetramer.

Its subcellular location is the cytoplasm. The enzyme catalyses L-citrulline + L-aspartate + ATP = 2-(N(omega)-L-arginino)succinate + AMP + diphosphate + H(+). It functions in the pathway amino-acid biosynthesis; L-arginine biosynthesis; L-arginine from L-ornithine and carbamoyl phosphate: step 2/3. This chain is Argininosuccinate synthase, found in Ehrlichia ruminantium (strain Welgevonden).